A 564-amino-acid polypeptide reads, in one-letter code: Eukaryotic translation initiation factor 3 subunit L (564 aa).

At Ser-2 the chain carries N-acetylserine. A PCI domain is found at 331 to 537 (DAIRVFANIL…IHIADTKVAR (207 aa)). N6-acetyllysine is present on residues Lys-465 and Lys-549.

Belongs to the eIF-3 subunit L family. Component of the eukaryotic translation initiation factor 3 (eIF-3) complex, which is composed of 13 subunits: EIF3A, EIF3B, EIF3C, EIF3D, EIF3E, EIF3F, EIF3G, EIF3H, EIF3I, EIF3J, EIF3K, EIF3L and EIF3M. The eIF-3 complex appears to include 3 stable modules: module A is composed of EIF3A, EIF3B, EIF3G and EIF3I; module B is composed of EIF3F, EIF3H, and EIF3M; and module C is composed of EIF3C, EIF3D, EIF3E, EIF3K and EIF3L. EIF3C of module C binds EIF3B of module A and EIF3H of module B, thereby linking the three modules. EIF3J is a labile subunit that binds to the eIF-3 complex via EIF3B. The eIF-3 complex may interact with RPS6KB1 under conditions of nutrient depletion. Mitogenic stimulation may lead to binding and activation of a complex composed of MTOR and RPTOR, leading to phosphorylation and release of RPS6KB1 and binding of EIF4B to eIF-3. Interacts with RRN3.

It localises to the cytoplasm. Functionally, component of the eukaryotic translation initiation factor 3 (eIF-3) complex, which is required for several steps in the initiation of protein synthesis. The eIF-3 complex associates with the 40S ribosome and facilitates the recruitment of eIF-1, eIF-1A, eIF-2:GTP:methionyl-tRNAi and eIF-5 to form the 43S pre-initiation complex (43S PIC). The eIF-3 complex stimulates mRNA recruitment to the 43S PIC and scanning of the mRNA for AUG recognition. The eIF-3 complex is also required for disassembly and recycling of post-termination ribosomal complexes and subsequently prevents premature joining of the 40S and 60S ribosomal subunits prior to initiation. The eIF-3 complex specifically targets and initiates translation of a subset of mRNAs involved in cell proliferation, including cell cycling, differentiation and apoptosis, and uses different modes of RNA stem-loop binding to exert either translational activation or repression. In Mus musculus (Mouse), this protein is Eukaryotic translation initiation factor 3 subunit L (Eif3l).